Consider the following 750-residue polypeptide: Methylmalonyl-CoA mutase, mitochondrial (750 aa).

A mitochondrion-targeting transit peptide spans 1 to 32; the sequence is MLRAKNQLFLLSPHYLKQVKESSGSRLIQQRL. Malonyl-CoA is bound at residue Gln50. Lys89 bears the N6-acetyllysine mark. Malonyl-CoA contacts are provided by residues 96 to 99 and 106 to 110; these read YPTM and TIRQY. An N6-acetyllysine modification is found at Lys212. Malonyl-CoA-binding positions include 216–218, Arg228, Lys255, His265, and 304–306; these read TIQ and RLS. Lys335 carries the post-translational modification N6-acetyllysine. The residue at position 343 (Lys343) is an N6-succinyllysine. Ser481 carries the post-translational modification Phosphoserine. Lys595 is modified (N6-succinyllysine). Lys602 carries the post-translational modification N6-acetyllysine. Positions 614–746 constitute a B12-binding domain; the sequence is RPRLLVAKMG…DDIEKCLEKK (133 aa). His627 is a binding site for adenosylcob(III)alamin.

It belongs to the methylmalonyl-CoA mutase family. As to quaternary structure, homodimer. Interacts (the apoenzyme form) with MMAA; the interaction is GTP dependent. Adenosylcob(III)alamin is required as a cofactor.

The protein localises to the mitochondrion matrix. It localises to the mitochondrion. Its subcellular location is the cytoplasm. It carries out the reaction (R)-methylmalonyl-CoA = succinyl-CoA. With respect to regulation, inhibited by itaconyl-CoA, a metabolite that inactivates the coenzyme B12 cofactor. Functionally, catalyzes the reversible isomerization of methylmalonyl-CoA (MMCoA) (generated from branched-chain amino acid metabolism and degradation of dietary odd chain fatty acids and cholesterol) to succinyl-CoA (3-carboxypropionyl-CoA), a key intermediate of the tricarboxylic acid cycle. This Pongo abelii (Sumatran orangutan) protein is Methylmalonyl-CoA mutase, mitochondrial (MMUT).